A 162-amino-acid polypeptide reads, in one-letter code: B-box zinc finger protein 23 (162 aa).

C5, C8, C28, H33, C63, C66, C86, and H91 together coordinate Zn(2+). Residues 5 to 47 (CEVCEKAEAEVLCCSDEAVLCKPCDIKVHEANKLFQRHHRVAL) form a B box-type 1; atypical zinc finger. The segment at 63 to 101 (CDICQERKGYFFCLEDRAMLCNDCDEAIHTCNSHQRFLL) adopts a B box-type 2; atypical zinc-finger fold. The tract at residues 137-162 (QYSSEETEAGNSGEIVHKNPSVILSP) is disordered.

The protein resides in the nucleus. Functionally, probable transcription factor that may be involved in seedling photomorphogenesis. The chain is B-box zinc finger protein 23 from Arabidopsis thaliana (Mouse-ear cress).